The following is a 426-amino-acid chain: Molybdopterin molybdenumtransferase 1 (426 aa).

It belongs to the MoeA family. The cofactor is Mg(2+).

The catalysed reaction is adenylyl-molybdopterin + molybdate = Mo-molybdopterin + AMP + H(+). The protein operates within cofactor biosynthesis; molybdopterin biosynthesis. In terms of biological role, catalyzes the insertion of molybdate into adenylated molybdopterin with the concomitant release of AMP. This Mycobacterium tuberculosis (strain ATCC 25618 / H37Rv) protein is Molybdopterin molybdenumtransferase 1 (moeA1).